The sequence spans 358 residues: Aminomethyltransferase (358 aa).

The protein belongs to the GcvT family. The glycine cleavage system is composed of four proteins: P, T, L and H.

It catalyses the reaction N(6)-[(R)-S(8)-aminomethyldihydrolipoyl]-L-lysyl-[protein] + (6S)-5,6,7,8-tetrahydrofolate = N(6)-[(R)-dihydrolipoyl]-L-lysyl-[protein] + (6R)-5,10-methylene-5,6,7,8-tetrahydrofolate + NH4(+). Functionally, the glycine cleavage system catalyzes the degradation of glycine. This chain is Aminomethyltransferase, found in Francisella philomiragia subsp. philomiragia (strain ATCC 25017 / CCUG 19701 / FSC 153 / O#319-036).